Consider the following 505-residue polypeptide: Lysine--tRNA ligase (505 aa).

Mg(2+) contacts are provided by Glu415 and Glu422.

This sequence belongs to the class-II aminoacyl-tRNA synthetase family. As to quaternary structure, homodimer. The cofactor is Mg(2+).

It is found in the cytoplasm. The enzyme catalyses tRNA(Lys) + L-lysine + ATP = L-lysyl-tRNA(Lys) + AMP + diphosphate. This chain is Lysine--tRNA ligase, found in Yersinia enterocolitica serotype O:8 / biotype 1B (strain NCTC 13174 / 8081).